The chain runs to 329 residues: E3 ubiquitin-protein ligase SINA-like 4 (329 aa).

A compositionally biased stretch (basic and acidic residues) spans Met-1–Gly-12. The interval Met-1–Leu-58 is disordered. The span at Lys-13 to Arg-24 shows a compositional bias: basic residues. The RING-type; degenerate zinc-finger motif lies at Cys-86 to Lys-122. Residues Val-136 to Asp-325 form an SBD region. The SIAH-type zinc-finger motif lies at Ala-139 to Lys-198. Zn(2+)-binding residues include Cys-144, Cys-151, His-164, Cys-168, Cys-175, Cys-180, His-192, and His-197.

This sequence belongs to the SINA (Seven in absentia) family.

It catalyses the reaction S-ubiquitinyl-[E2 ubiquitin-conjugating enzyme]-L-cysteine + [acceptor protein]-L-lysine = [E2 ubiquitin-conjugating enzyme]-L-cysteine + N(6)-ubiquitinyl-[acceptor protein]-L-lysine.. It functions in the pathway protein modification; protein ubiquitination. Its function is as follows. E3 ubiquitin-protein ligase that mediates ubiquitination and subsequent proteasomal degradation of target proteins. E3 ubiquitin ligases accept ubiquitin from an E2 ubiquitin-conjugating enzyme in the form of a thioester and then directly transfers the ubiquitin to targeted substrates. It probably triggers the ubiquitin-mediated degradation of different substrates. The chain is E3 ubiquitin-protein ligase SINA-like 4 from Arabidopsis thaliana (Mouse-ear cress).